A 239-amino-acid chain; its full sequence is LexA repressor (239 aa).

A DNA-binding region (H-T-H motif) is located at residues 27-47; it reads FDEMKDALDLASKSGIHRLIT. Residues Ser159 and Lys197 each act as for autocatalytic cleavage activity in the active site.

The protein belongs to the peptidase S24 family. As to quaternary structure, homodimer.

It catalyses the reaction Hydrolysis of Ala-|-Gly bond in repressor LexA.. In terms of biological role, represses a number of genes involved in the response to DNA damage (SOS response), including recA and lexA. In the presence of single-stranded DNA, RecA interacts with LexA causing an autocatalytic cleavage which disrupts the DNA-binding part of LexA, leading to derepression of the SOS regulon and eventually DNA repair. This is LexA repressor from Rhizobium radiobacter (Agrobacterium tumefaciens).